A 154-amino-acid polypeptide reads, in one-letter code: 6,7-dimethyl-8-ribityllumazine synthase (154 aa).

Residues Phe-23, 57–59, and 81–83 each bind 5-amino-6-(D-ribitylamino)uracil; these read AFE and AVI. 86–87 serves as a coordination point for (2S)-2-hydroxy-3-oxobutyl phosphate; it reads ST. The Proton donor role is filled by His-89. Phe-114 serves as a coordination point for 5-amino-6-(D-ribitylamino)uracil. Residue Arg-128 participates in (2S)-2-hydroxy-3-oxobutyl phosphate binding.

Belongs to the DMRL synthase family.

It catalyses the reaction (2S)-2-hydroxy-3-oxobutyl phosphate + 5-amino-6-(D-ribitylamino)uracil = 6,7-dimethyl-8-(1-D-ribityl)lumazine + phosphate + 2 H2O + H(+). It functions in the pathway cofactor biosynthesis; riboflavin biosynthesis; riboflavin from 2-hydroxy-3-oxobutyl phosphate and 5-amino-6-(D-ribitylamino)uracil: step 1/2. In terms of biological role, catalyzes the formation of 6,7-dimethyl-8-ribityllumazine by condensation of 5-amino-6-(D-ribitylamino)uracil with 3,4-dihydroxy-2-butanone 4-phosphate. This is the penultimate step in the biosynthesis of riboflavin. This Campylobacter jejuni subsp. jejuni serotype O:2 (strain ATCC 700819 / NCTC 11168) protein is 6,7-dimethyl-8-ribityllumazine synthase.